Here is a 579-residue protein sequence, read N- to C-terminus: Sulfite reductase [NADPH] hemoprotein beta-component (579 aa).

[4Fe-4S] cluster is bound by residues Cys-434, Cys-440, Cys-479, and Cys-483. Cys-483 serves as a coordination point for siroheme.

This sequence belongs to the nitrite and sulfite reductase 4Fe-4S domain family. Alpha(8)-beta(8). The alpha component is a flavoprotein, the beta component is a hemoprotein. The cofactor is siroheme. It depends on [4Fe-4S] cluster as a cofactor.

The enzyme catalyses hydrogen sulfide + 3 NADP(+) + 3 H2O = sulfite + 3 NADPH + 4 H(+). The protein operates within sulfur metabolism; hydrogen sulfide biosynthesis; hydrogen sulfide from sulfite (NADPH route): step 1/1. Component of the sulfite reductase complex that catalyzes the 6-electron reduction of sulfite to sulfide. This is one of several activities required for the biosynthesis of L-cysteine from sulfate. The protein is Sulfite reductase [NADPH] hemoprotein beta-component of Salmonella choleraesuis (strain SC-B67).